We begin with the raw amino-acid sequence, 1004 residues long: NACHT, LRR and PYD domains-containing protein 9C (1004 aa).

Positions 1-92 (MVDSSSYGLL…TMAQIERRDK (92 aa)) constitute a Pyrin domain. In terms of domain architecture, NACHT spans 143–465 (ATAVVLGTRG…KQDKDTYHPV (323 aa)). 149–156 (GTRGKGKT) contributes to the ATP binding site. 5 LRR repeats span residues 750–770 (KVKH…MFLC), 779–800 (VLES…HLYE), 807–828 (HLSL…LLCE), 836–857 (TLKE…EISA), and 864–884 (NLKT…KRLC).

The protein belongs to the NLRP family. Oocyte specific.

The protein resides in the cytoplasm. Its function is as follows. May be involved in inflammation. This is NACHT, LRR and PYD domains-containing protein 9C (Nlrp9c) from Mus musculus (Mouse).